The chain runs to 323 residues: HPr kinase/phosphorylase (323 aa).

Residues H146 and K167 contribute to the active site. 161-168 (GESGLGKS) serves as a coordination point for ATP. Residue S168 participates in Mg(2+) binding. D185 (proton acceptor; for phosphorylation activity. Proton donor; for dephosphorylation activity) is an active-site residue. The interval 209-218 (LEVRGLGLLD) is important for the catalytic mechanism of both phosphorylation and dephosphorylation. E210 contributes to the Mg(2+) binding site. R250 is an active-site residue. The tract at residues 271-276 (QVAAGR) is important for the catalytic mechanism of dephosphorylation.

The protein belongs to the HPrK/P family. Homohexamer. The cofactor is Mg(2+).

The catalysed reaction is [HPr protein]-L-serine + ATP = [HPr protein]-O-phospho-L-serine + ADP + H(+). It catalyses the reaction [HPr protein]-O-phospho-L-serine + phosphate + H(+) = [HPr protein]-L-serine + diphosphate. Catalyzes the ATP- as well as the pyrophosphate-dependent phosphorylation of a specific serine residue in HPr, a phosphocarrier protein of the phosphoenolpyruvate-dependent sugar phosphotransferase system (PTS). HprK/P also catalyzes the pyrophosphate-producing, inorganic phosphate-dependent dephosphorylation (phosphorolysis) of seryl-phosphorylated HPr (P-Ser-HPr). This is HPr kinase/phosphorylase from Cupriavidus metallidurans (strain ATCC 43123 / DSM 2839 / NBRC 102507 / CH34) (Ralstonia metallidurans).